The sequence spans 503 residues: Probable cytosol aminopeptidase (503 aa).

The Mn(2+) site is built by K270 and D275. K282 is a catalytic residue. Residues D293, D352, and E354 each contribute to the Mn(2+) site. The active site involves R356.

It belongs to the peptidase M17 family. The cofactor is Mn(2+).

Its subcellular location is the cytoplasm. It catalyses the reaction Release of an N-terminal amino acid, Xaa-|-Yaa-, in which Xaa is preferably Leu, but may be other amino acids including Pro although not Arg or Lys, and Yaa may be Pro. Amino acid amides and methyl esters are also readily hydrolyzed, but rates on arylamides are exceedingly low.. It carries out the reaction Release of an N-terminal amino acid, preferentially leucine, but not glutamic or aspartic acids.. Its function is as follows. Presumably involved in the processing and regular turnover of intracellular proteins. Catalyzes the removal of unsubstituted N-terminal amino acids from various peptides. The polypeptide is Probable cytosol aminopeptidase (Salmonella agona (strain SL483)).